Consider the following 607-residue polypeptide: Chaperone protein DnaK (607 aa).

A Phosphothreonine; by autocatalysis modification is found at threonine 174. The tract at residues 571 to 607 (AAMYQKQAQQQQPGPGPDAGKDKDDKDKTVDADYEVK) is disordered. Residues 589 to 607 (AGKDKDDKDKTVDADYEVK) show a composition bias toward basic and acidic residues.

Belongs to the heat shock protein 70 family.

In terms of biological role, acts as a chaperone. The sequence is that of Chaperone protein DnaK from Desulforudis audaxviator (strain MP104C).